Consider the following 267-residue polypeptide: L-aspartate dehydrogenase (267 aa).

Positions 124 and 190 each coordinate NAD(+). Histidine 218 is an active-site residue.

Belongs to the L-aspartate dehydrogenase family.

It catalyses the reaction L-aspartate + NADP(+) + H2O = oxaloacetate + NH4(+) + NADPH + H(+). The enzyme catalyses L-aspartate + NAD(+) + H2O = oxaloacetate + NH4(+) + NADH + H(+). Its pathway is cofactor biosynthesis; NAD(+) biosynthesis; iminoaspartate from L-aspartate (dehydrogenase route): step 1/1. In terms of biological role, specifically catalyzes the NAD or NADP-dependent dehydrogenation of L-aspartate to iminoaspartate. In Methanococcus maripaludis (strain C5 / ATCC BAA-1333), this protein is L-aspartate dehydrogenase.